A 687-amino-acid chain; its full sequence is Polyphosphate kinase (687 aa).

ATP is bound at residue asparagine 45. Residues arginine 375 and arginine 405 each coordinate Mg(2+). The Phosphohistidine intermediate role is filled by histidine 435. 3 residues coordinate ATP: tyrosine 472, arginine 568, and histidine 596.

The protein belongs to the polyphosphate kinase 1 (PPK1) family. Requires Mg(2+) as cofactor. In terms of processing, an intermediate of this reaction is the autophosphorylated ppk in which a phosphate is covalently linked to a histidine residue through a N-P bond.

The catalysed reaction is [phosphate](n) + ATP = [phosphate](n+1) + ADP. Catalyzes the reversible transfer of the terminal phosphate of ATP to form a long-chain polyphosphate (polyP). This Burkholderia ambifaria (strain MC40-6) protein is Polyphosphate kinase.